The following is a 251-amino-acid chain: MAARYDRAITVFSPDGHLFQVEYAQEAVKKGSTAVGIRGKDIVVLGVEKKSVAKLQEERTVRKICALDEHVCMAFAGLTADARIVINRARVECQSHRLTVEDPVTVEYITRYIATLKQRYTQSNGRRPFGISALIVGFDFDGTPRLYQTDPSGTYHAWKANAIGRSAKTVREFLEKNYTDEAIASDNDAIKLAIKALLEVVQSGGKNIELAVIRRNQPLKILESKEIETLVAEIEKEKEEEAEKKKQKKSS.

The protein belongs to the peptidase T1A family. The 26S proteasome consists of a 20S proteasome core and two 19S regulatory subunits. The 20S proteasome core is composed of 28 subunits that are arranged in four stacked rings, resulting in a barrel-shaped structure. The two end rings are each formed by seven alpha subunits, and the two central rings are each formed by seven beta subunits. The catalytic chamber with the active sites is on the inside of the barrel.

It localises to the cytoplasm. It is found in the nucleus. In terms of biological role, the proteasome is a multicatalytic proteinase complex which is characterized by its ability to cleave peptides with Arg, Phe, Tyr, Leu, and Glu adjacent to the leaving group at neutral or slightly basic pH. The proteasome has an ATP-dependent proteolytic activity. The sequence is that of Proteasome subunit alpha type-7 (psma7) from Carassius auratus (Goldfish).